Consider the following 105-residue polypeptide: Nucleoid-associated protein SE_2306 (105 aa).

The tract at residues 1–40 (MRGGGNMQQMMKQMQKMQKKMAQEQEKLKEERVAGTAGGG) is disordered. Residues 7-16 (MQQMMKQMQK) are compositionally biased toward low complexity. A compositionally biased stretch (basic and acidic residues) spans 21-33 (MAQEQEKLKEERV).

It belongs to the YbaB/EbfC family. Homodimer.

Its subcellular location is the cytoplasm. It localises to the nucleoid. Its function is as follows. Binds to DNA and alters its conformation. May be involved in regulation of gene expression, nucleoid organization and DNA protection. The chain is Nucleoid-associated protein SE_2306 from Staphylococcus epidermidis (strain ATCC 12228 / FDA PCI 1200).